The chain runs to 342 residues: Anthranilate phosphoribosyltransferase (342 aa).

Residues glycine 84, 87 to 88, threonine 92, 94 to 97, 112 to 120, and serine 124 contribute to the 5-phospho-alpha-D-ribose 1-diphosphate site; these read GD, NIST, and KHGGRSVSS. Residue glycine 84 coordinates anthranilate. Serine 96 contributes to the Mg(2+) binding site. Position 170 (arginine 170) interacts with anthranilate. Mg(2+)-binding residues include aspartate 229 and glutamate 230.

It belongs to the anthranilate phosphoribosyltransferase family. As to quaternary structure, homodimer. Requires Mg(2+) as cofactor.

The enzyme catalyses N-(5-phospho-beta-D-ribosyl)anthranilate + diphosphate = 5-phospho-alpha-D-ribose 1-diphosphate + anthranilate. It functions in the pathway amino-acid biosynthesis; L-tryptophan biosynthesis; L-tryptophan from chorismate: step 2/5. Catalyzes the transfer of the phosphoribosyl group of 5-phosphorylribose-1-pyrophosphate (PRPP) to anthranilate to yield N-(5'-phosphoribosyl)-anthranilate (PRA). The polypeptide is Anthranilate phosphoribosyltransferase (Verminephrobacter eiseniae (strain EF01-2)).